The chain runs to 432 residues: Trigger factor (432 aa).

One can recognise a PPIase FKBP-type domain in the interval 161 to 246 (EDRVTIDFTG…LKKVEERELP (86 aa)).

Belongs to the FKBP-type PPIase family. Tig subfamily.

The protein resides in the cytoplasm. The catalysed reaction is [protein]-peptidylproline (omega=180) = [protein]-peptidylproline (omega=0). Functionally, involved in protein export. Acts as a chaperone by maintaining the newly synthesized protein in an open conformation. Functions as a peptidyl-prolyl cis-trans isomerase. The polypeptide is Trigger factor (Cronobacter sakazakii (strain ATCC BAA-894) (Enterobacter sakazakii)).